The chain runs to 185 residues: Ribose 1,5-bisphosphate phosphokinase PhnN (185 aa).

Belongs to the ribose 1,5-bisphosphokinase family.

It carries out the reaction alpha-D-ribose 1,5-bisphosphate + ATP = 5-phospho-alpha-D-ribose 1-diphosphate + ADP. It participates in metabolic intermediate biosynthesis; 5-phospho-alpha-D-ribose 1-diphosphate biosynthesis; 5-phospho-alpha-D-ribose 1-diphosphate from D-ribose 5-phosphate (route II): step 3/3. Functionally, catalyzes the phosphorylation of ribose 1,5-bisphosphate to 5-phospho-D-ribosyl alpha-1-diphosphate (PRPP). This Escherichia coli (strain SMS-3-5 / SECEC) protein is Ribose 1,5-bisphosphate phosphokinase PhnN.